Consider the following 256-residue polypeptide: Homeobox protein Hox-D13a (256 aa).

A DNA-binding region (homeobox) is located at residues 191-250; it reads GRKKRVPYTKFQLKELEREYNTTKFITKENRRRIASSTNLSERQVTIWFQNRRVKDKKRP.

It belongs to the Abd-B homeobox family.

It is found in the nucleus. Functionally, sequence-specific transcription factor which is part of a developmental regulatory system that provides cells with specific positional identities on the anterior-posterior axis. This Danio rerio (Zebrafish) protein is Homeobox protein Hox-D13a (hoxd13a).